Consider the following 239-residue polypeptide: Ribonuclease PH (239 aa).

Phosphate contacts are provided by residues Arg-86 and Gly-124–Arg-126.

It belongs to the RNase PH family. As to quaternary structure, homohexameric ring arranged as a trimer of dimers.

It carries out the reaction tRNA(n+1) + phosphate = tRNA(n) + a ribonucleoside 5'-diphosphate. Phosphorolytic 3'-5' exoribonuclease that plays an important role in tRNA 3'-end maturation. Removes nucleotide residues following the 3'-CCA terminus of tRNAs; can also add nucleotides to the ends of RNA molecules by using nucleoside diphosphates as substrates, but this may not be physiologically important. Probably plays a role in initiation of 16S rRNA degradation (leading to ribosome degradation) during starvation. This chain is Ribonuclease PH, found in Rhodopseudomonas palustris (strain BisB18).